Reading from the N-terminus, the 158-residue chain is Cytochrome c-type biogenesis protein CcmE (158 aa).

Topologically, residues methionine 1–arginine 7 are cytoplasmic. The chain crosses the membrane as a helical; Signal-anchor for type II membrane protein span at residues leucine 8–alanine 28. Over phenylalanine 29–tyrosine 158 the chain is Periplasmic. Heme contacts are provided by histidine 123 and tyrosine 127. The tract at residues arginine 138–tyrosine 158 is disordered.

The protein belongs to the CcmE/CycJ family.

It is found in the cell inner membrane. Its function is as follows. Heme chaperone required for the biogenesis of c-type cytochromes. Transiently binds heme delivered by CcmC and transfers the heme to apo-cytochromes in a process facilitated by CcmF and CcmH. The chain is Cytochrome c-type biogenesis protein CcmE from Alkalilimnicola ehrlichii (strain ATCC BAA-1101 / DSM 17681 / MLHE-1).